Here is an 830-residue protein sequence, read N- to C-terminus: uncharacterized protein (830 aa).

Disordered stretches follow at residues 1 to 28 (MGVQ…DSIC), 70 to 147 (RRAN…GNFA), and 186 to 210 (AASP…SKSL). Over residues 10 to 27 (NSKNWLRQPDQQPIQDSI) the composition is skewed to polar residues. Composition is skewed to low complexity over residues 100–130 (QKSS…SIQS) and 186–199 (AASP…ASTS). Residues 200–210 (ENLTPTSSKSL) are compositionally biased toward polar residues. 10 consecutive transmembrane segments (helical) span residues 505 to 525 (WLVA…VYGG), 529 to 549 (DMLI…YINP), 551 to 571 (FFLF…FLGR), 584 to 604 (FCFA…YVVF), 622 to 642 (MLYA…GSAL), 659 to 679 (IIAV…LSLL), 691 to 711 (IQMF…LHFG), 715 to 735 (ISSA…SHFI), 740 to 760 (FAVV…AQGG), and 802 to 822 (IAIG…PFFG).

The protein belongs to the ThrE exporter (TC 2.A.79) family.

The protein resides in the cell membrane. It localises to the cell tip. This is an uncharacterized protein from Schizosaccharomyces pombe (strain 972 / ATCC 24843) (Fission yeast).